A 433-amino-acid chain; its full sequence is Adenylosuccinate synthetase (433 aa).

GTP-binding positions include 11–17 (GDEGKGK) and 39–41 (GHT). Catalysis depends on Asp12, which acts as the Proton acceptor. Mg(2+) contacts are provided by Asp12 and Gly39. IMP-binding positions include 12–15 (DEGK), 37–40 (NAGH), Thr134, Arg148, Asn230, Thr245, and Arg309. Residue His40 is the Proton donor of the active site. 305–311 (VTTGRKR) contacts substrate. GTP-binding positions include Arg311, 337 to 339 (KLD), and 419 to 421 (GTG).

Belongs to the adenylosuccinate synthetase family. As to quaternary structure, homodimer. It depends on Mg(2+) as a cofactor.

It localises to the cytoplasm. The catalysed reaction is IMP + L-aspartate + GTP = N(6)-(1,2-dicarboxyethyl)-AMP + GDP + phosphate + 2 H(+). The protein operates within purine metabolism; AMP biosynthesis via de novo pathway; AMP from IMP: step 1/2. In terms of biological role, plays an important role in the de novo pathway and in the salvage pathway of purine nucleotide biosynthesis. Catalyzes the first committed step in the biosynthesis of AMP from IMP. In Saccharomyces cerevisiae (strain JAY291) (Baker's yeast), this protein is Adenylosuccinate synthetase.